We begin with the raw amino-acid sequence, 757 residues long: Probable inorganic carbon transporter subunit DabA (757 aa).

Cys321, Asp323, His475, and Cys490 together coordinate Zn(2+).

The protein belongs to the inorganic carbon transporter (TC 9.A.2) DabA family. In terms of assembly, forms a complex with DabB. The cofactor is Zn(2+).

It is found in the cell inner membrane. Its function is as follows. Part of an energy-coupled inorganic carbon pump. The sequence is that of Probable inorganic carbon transporter subunit DabA from Idiomarina loihiensis (strain ATCC BAA-735 / DSM 15497 / L2-TR).